Here is a 429-residue protein sequence, read N- to C-terminus: Enolase (429 aa).

Position 162 (Q162) interacts with (2R)-2-phosphoglycerate. Catalysis depends on E204, which acts as the Proton donor. D241, E283, and D310 together coordinate Mg(2+). (2R)-2-phosphoglycerate is bound by residues K335, R364, S365, and K386. Residue K335 is the Proton acceptor of the active site.

This sequence belongs to the enolase family. It depends on Mg(2+) as a cofactor.

The protein localises to the cytoplasm. It localises to the secreted. Its subcellular location is the cell surface. It carries out the reaction (2R)-2-phosphoglycerate = phosphoenolpyruvate + H2O. Its pathway is carbohydrate degradation; glycolysis; pyruvate from D-glyceraldehyde 3-phosphate: step 4/5. Functionally, catalyzes the reversible conversion of 2-phosphoglycerate (2-PG) into phosphoenolpyruvate (PEP). It is essential for the degradation of carbohydrates via glycolysis. This is Enolase from Mycolicibacterium vanbaalenii (strain DSM 7251 / JCM 13017 / BCRC 16820 / KCTC 9966 / NRRL B-24157 / PYR-1) (Mycobacterium vanbaalenii).